Consider the following 552-residue polypeptide: Cytochrome c oxidase subunit 1 (552 aa).

The helical transmembrane segment at 35-55 threads the bilayer; the sequence is VIGIQYLVTAFIFYLIGGLMA. Residue His82 participates in Fe(II)-heme a binding. Helical transmembrane passes span 85–105, 120–140, 164–184, 211–231, 252–272, and 284–304; these read IMIF…YLVP, ALAF…FLFG, WILA…NFIV, LLAL…LFDI, LFWF…FGIM, and IFGY…GLFV. Cu cation contacts are provided by His258 and Tyr262. The 1'-histidyl-3'-tyrosine (His-Tyr) cross-link spans 258 to 262; sequence HPAVY. 2 residues coordinate Cu cation: His307 and His308. The next 5 helical transmembrane spans lie at 321–341, 355–375, 390–410, 426–446, and 470–490; these read FFTI…FSWV, MLFA…GVTL, VVAH…YAGI, LGIL…LPMH, and ICTI…INII. Residue His393 participates in heme a3 binding. Fe(II)-heme a is bound at residue His395.

Belongs to the heme-copper respiratory oxidase family. Cu(2+) is required as a cofactor. It depends on heme as a cofactor.

Its subcellular location is the cell membrane. It catalyses the reaction 4 Fe(II)-[cytochrome c] + O2 + 8 H(+)(in) = 4 Fe(III)-[cytochrome c] + 2 H2O + 4 H(+)(out). The protein operates within energy metabolism; oxidative phosphorylation. Cytochrome c oxidase is the component of the respiratory chain that catalyzes the reduction of oxygen to water. Subunits 1-3 form the functional core of the enzyme complex. CO I is the catalytic subunit of the enzyme. Electrons originating in cytochrome c are transferred via the copper A center of subunit 2 and heme A of subunit 1 to the bimetallic center formed by heme A3 and copper B. In Thermostichus vulcanus (Synechococcus vulcanus), this protein is Cytochrome c oxidase subunit 1 (ctaD).